The sequence spans 63 residues: Large ribosomal subunit protein bL28 (63 aa).

It belongs to the bacterial ribosomal protein bL28 family.

In Citrifermentans bemidjiense (strain ATCC BAA-1014 / DSM 16622 / JCM 12645 / Bem) (Geobacter bemidjiensis), this protein is Large ribosomal subunit protein bL28.